A 113-amino-acid polypeptide reads, in one-letter code: Large ribosomal subunit protein bL19 (113 aa).

Belongs to the bacterial ribosomal protein bL19 family.

In terms of biological role, this protein is located at the 30S-50S ribosomal subunit interface and may play a role in the structure and function of the aminoacyl-tRNA binding site. The protein is Large ribosomal subunit protein bL19 of Corynebacterium diphtheriae (strain ATCC 700971 / NCTC 13129 / Biotype gravis).